Reading from the N-terminus, the 332-residue chain is Tetraacyldisaccharide 4'-kinase (332 aa).

55–62 (GVGGSGKT) is an ATP binding site.

Belongs to the LpxK family.

The catalysed reaction is a lipid A disaccharide + ATP = a lipid IVA + ADP + H(+). It participates in glycolipid biosynthesis; lipid IV(A) biosynthesis; lipid IV(A) from (3R)-3-hydroxytetradecanoyl-[acyl-carrier-protein] and UDP-N-acetyl-alpha-D-glucosamine: step 6/6. Functionally, transfers the gamma-phosphate of ATP to the 4'-position of a tetraacyldisaccharide 1-phosphate intermediate (termed DS-1-P) to form tetraacyldisaccharide 1,4'-bis-phosphate (lipid IVA). This is Tetraacyldisaccharide 4'-kinase from Acidithiobacillus ferrooxidans (strain ATCC 53993 / BNL-5-31) (Leptospirillum ferrooxidans (ATCC 53993)).